A 120-amino-acid polypeptide reads, in one-letter code: Small ribosomal subunit protein bS16 (120 aa).

Residues 81–120 form a disordered region; the sequence is GLAKRPARNNPQKAEPGEKSKERAAKRAEKAAAPAEDAAA. Basic and acidic residues predominate over residues 95–110; it reads EPGEKSKERAAKRAEK. The segment covering 111–120 has biased composition (low complexity); that stretch reads AAAPAEDAAA.

Belongs to the bacterial ribosomal protein bS16 family.

This is Small ribosomal subunit protein bS16 from Methylorubrum populi (strain ATCC BAA-705 / NCIMB 13946 / BJ001) (Methylobacterium populi).